We begin with the raw amino-acid sequence, 622 residues long: Low affinity potassium transport system protein Kup (622 aa).

12 helical membrane passes run 9–29 (LPAI…TSPL), 49–69 (VFGF…IKYL), 103–123 (VIMG…TPAI), 137–157 (PQLD…LFMI), 165–185 (VGKL…VLGL), 213–233 (VSFI…ALYA), 247–267 (WFTV…ALLL), 276–296 (PFFL…AALA), 337–357 (IYIP…IVSF), 363–383 (LAAA…ILST), 396–416 (FVAL…SANL), and 419–439 (LLSG…IMTT).

It belongs to the HAK/KUP transporter (TC 2.A.72) family.

It localises to the cell inner membrane. The enzyme catalyses K(+)(in) + H(+)(in) = K(+)(out) + H(+)(out). Responsible for the low-affinity transport of potassium into the cell. Likely operates as a K(+):H(+) symporter. In Salmonella typhi, this protein is Low affinity potassium transport system protein Kup.